Reading from the N-terminus, the 243-residue chain is Ubiquinone/menaquinone biosynthesis C-methyltransferase UbiE (243 aa).

Residues Thr-69, Asp-90, and 116 to 117 contribute to the S-adenosyl-L-methionine site; that span reads DA.

This sequence belongs to the class I-like SAM-binding methyltransferase superfamily. MenG/UbiE family.

The enzyme catalyses a 2-demethylmenaquinol + S-adenosyl-L-methionine = a menaquinol + S-adenosyl-L-homocysteine + H(+). The catalysed reaction is a 2-methoxy-6-(all-trans-polyprenyl)benzene-1,4-diol + S-adenosyl-L-methionine = a 5-methoxy-2-methyl-3-(all-trans-polyprenyl)benzene-1,4-diol + S-adenosyl-L-homocysteine + H(+). It participates in quinol/quinone metabolism; menaquinone biosynthesis; menaquinol from 1,4-dihydroxy-2-naphthoate: step 2/2. It functions in the pathway cofactor biosynthesis; ubiquinone biosynthesis. Its function is as follows. Methyltransferase required for the conversion of demethylmenaquinol (DMKH2) to menaquinol (MKH2) and the conversion of 2-polyprenyl-6-methoxy-1,4-benzoquinol (DDMQH2) to 2-polyprenyl-3-methyl-6-methoxy-1,4-benzoquinol (DMQH2). This Burkholderia cenocepacia (strain ATCC BAA-245 / DSM 16553 / LMG 16656 / NCTC 13227 / J2315 / CF5610) (Burkholderia cepacia (strain J2315)) protein is Ubiquinone/menaquinone biosynthesis C-methyltransferase UbiE.